Reading from the N-terminus, the 481-residue chain is 2-succinylbenzoate--CoA ligase (481 aa).

Belongs to the ATP-dependent AMP-binding enzyme family. MenE subfamily.

The enzyme catalyses 2-succinylbenzoate + ATP + CoA = 2-succinylbenzoyl-CoA + AMP + diphosphate. The protein operates within quinol/quinone metabolism; 1,4-dihydroxy-2-naphthoate biosynthesis; 1,4-dihydroxy-2-naphthoate from chorismate: step 5/7. It functions in the pathway quinol/quinone metabolism; menaquinone biosynthesis. In terms of biological role, converts 2-succinylbenzoate (OSB) to 2-succinylbenzoyl-CoA (OSB-CoA). This chain is 2-succinylbenzoate--CoA ligase, found in Bacillus cytotoxicus (strain DSM 22905 / CIP 110041 / 391-98 / NVH 391-98).